A 485-amino-acid chain; its full sequence is Cyclic GMP-AMP synthase-like receptor (485 aa).

ATP-binding positions include Ser-70 and 82–84; that span reads EYD. Mg(2+)-binding residues include Glu-82, Asp-84, and Asp-204. GTP-binding positions include Asp-204 and 247–254; that span reads RLSFYEQE. Residues Lys-271 and Lys-274 each coordinate ATP. Residues Ile-298 and Asp-304 each coordinate Mn(2+).

It belongs to the mab-21 family. It depends on Mg(2+) as a cofactor. Mn(2+) is required as a cofactor.

The enzyme catalyses GTP + ATP = 2',3'-cGAMP + 2 diphosphate. The catalysed reaction is GTP + ATP = pppGp(2'-5')A + diphosphate. It carries out the reaction pppGp(2'-5')A = 2',3'-cGAMP + diphosphate. Its function is as follows. Nucleotidyltransferase that catalyzes the formation of cyclic GMP-AMP (2',3'-cGAMP) from ATP and GTP and plays a key role in innate immunity. Directly binds some unknown ligand, activating the nucleotidyltransferase activity, leading to synthesis of 2',3'-cGAMP, a second messenger that binds to and activates Sting, thereby triggering the immune response via activation of the NF-kappa-B transcription factor. This is Cyclic GMP-AMP synthase-like receptor from Trichogramma pretiosum (Parasitoid wasp).